The sequence spans 184 residues: Putative rRNA methyltransferase YlbH (184 aa).

A disordered region spans residues M1–R22.

It belongs to the methyltransferase superfamily. RsmD family.

Functionally, may catalyze the S-adenosyl-L-methionine-dependent methylation of a specific base in rRNA. The protein is Putative rRNA methyltransferase YlbH (ylbH) of Bacillus subtilis (strain 168).